The chain runs to 326 residues: tRNA dimethylallyltransferase (326 aa).

18–25 (GPTASGKS) is a binding site for ATP. 20-25 (TASGKS) lines the substrate pocket. Interaction with substrate tRNA regions lie at residues 43-46 (DSMQ) and 167-171 (QRIAR).

The protein belongs to the IPP transferase family. As to quaternary structure, monomer. Mg(2+) is required as a cofactor.

It catalyses the reaction adenosine(37) in tRNA + dimethylallyl diphosphate = N(6)-dimethylallyladenosine(37) in tRNA + diphosphate. Its function is as follows. Catalyzes the transfer of a dimethylallyl group onto the adenine at position 37 in tRNAs that read codons beginning with uridine, leading to the formation of N6-(dimethylallyl)adenosine (i(6)A). The protein is tRNA dimethylallyltransferase of Rhodospirillum rubrum (strain ATCC 11170 / ATH 1.1.1 / DSM 467 / LMG 4362 / NCIMB 8255 / S1).